Reading from the N-terminus, the 313-residue chain is Cadmium, cobalt and zinc/H(+)-K(+) antiporter (313 aa).

The Extracellular segment spans residues 1–14; it reads MGHNHNHAGGSNKK. Residues 15–35 form a helical membrane-spanning segment; sequence VLLISFIMITGYMIIEAIGGF. Residues 36 to 45 are Cytoplasmic-facing; the sequence is LTNSLALLSD. A helical transmembrane segment spans residues 46-66; sequence AGHMLSDSISLMVALIAFKLA. Residues 67-80 lie on the Extracellular side of the membrane; that stretch reads EKKASHHKTFGYKR. Residues 81-101 traverse the membrane as a helical segment; sequence FEILAAVINGVALILISLYII. The Cytoplasmic segment spans residues 102 to 117; sequence YEAIKRFSHPPEVATT. A helical transmembrane segment spans residues 118–138; it reads GMLTISIIGLAVNILVAWIML. Topologically, residues 139–159 are extracellular; it reads NGGDTKNNLNIRGAYLHVISD. The helical transmembrane segment at 160–180 threads the bilayer; sequence MLGSIGAILAAILIIFFGWSW. At 181–313 the chain is on the cytoplasmic side; it reads ADPAASVIVA…TENPRDHHHH (133 aa).

It belongs to the cation diffusion facilitator (CDF) transporter (TC 2.A.4) family. SLC30A subfamily.

Its subcellular location is the cell membrane. Its function is as follows. Involved in divalent cation and potassium homeostasis in the cell. Catalyzes the active efflux of zinc, cadmium and cobalt, in exchange for potassium and H(+) ions. In Bacillus velezensis (strain DSM 23117 / BGSC 10A6 / LMG 26770 / FZB42) (Bacillus amyloliquefaciens subsp. plantarum), this protein is Cadmium, cobalt and zinc/H(+)-K(+) antiporter (czcD).